We begin with the raw amino-acid sequence, 642 residues long: Protein INCREASED PETAL GROWTH ANISOTROPY 1 (642 aa).

Positions 1–60 (MVAGKVRVTMGFHKSPSTKKTKDMPSPLPLPPPPPPPLKPPSSGSATTKPPINPSKPGFT) are disordered. Pro residues predominate over residues 26–40 (SPLPLPPPPPPPLKP). Residues 80 to 183 (AASHNGVVSE…EAEIVELRKL (104 aa)) are a coiled coil. Residues 223–351 (NLPEPITNQE…PPKSLSIASA (129 aa)) are disordered. Residues 247–256 (DIYRKDEIES) show a composition bias toward basic and acidic residues. A compositionally biased stretch (low complexity) spans 258 to 277 (SRSSNSEELTESSSLSTVRS). A compositionally biased stretch (pro residues) spans 302–344 (DPPPQKSIPPPPPPPPPPLLQQPPPPPSVSKAPPPPPPPPPPK).

Belongs to the IPGA1 family. As to quaternary structure, associates to cortical microtubules via its N-terminal region. Interacts with ANGUSTIFOLIA (AN) on microtubule upon mechanical stress to regulate microtubule organization. Binds to the microtubule-severing enzyme KATANIN (KTN1). As to expression, expressed ubiquitously at all development stages, with highest in developing petals. During mechanical stress, accumulates in granules on microtubules.

Its subcellular location is the cytoplasm. It is found in the cytoskeleton. It localises to the cytosol. The protein resides in the cell membrane. In terms of biological role, microtubule-associated protein involved in the regulation of anisotropic petal and cotyledons growth and shape by affecting cortical microtubule organization. Prevents cortical microtubules organization into parallel arrays oriented perpendicular to the axis of cell elongation thus limiting anisotropic cell growth in the late phases of petal development. Cooperatively with ANGUSTIFOLIA (AN), negatively regulates cortical microtubules (CMTs) organization in response to mechanical stress and modulates pavement cells morphogenesis leading to puzzle shape, probably in an AAA1/KTN1-dependent manner. In Arabidopsis thaliana (Mouse-ear cress), this protein is Protein INCREASED PETAL GROWTH ANISOTROPY 1.